We begin with the raw amino-acid sequence, 251 residues long: Aliphatic sulfonates import ATP-binding protein SsuB (251 aa).

Residues 3 to 231 form the ABC transporter domain; the sequence is VSINEVSKYF…PRSKNSESFQ (229 aa). Position 39–46 (39–46) interacts with ATP; sequence GPSGCGKS.

The protein belongs to the ABC transporter superfamily. Aliphatic sulfonates importer (TC 3.A.1.17.2) family. As to quaternary structure, the complex is composed of two ATP-binding proteins (SsuB), two transmembrane proteins (SsuC) and a solute-binding protein (SsuA).

The protein localises to the cell membrane. It carries out the reaction ATP + H2O + aliphatic sulfonate-[sulfonate-binding protein]Side 1 = ADP + phosphate + aliphatic sulfonateSide 2 + [sulfonate-binding protein]Side 1.. Part of the ABC transporter complex SsuABC involved in aliphatic sulfonates import. Responsible for energy coupling to the transport system. This Bacillus cereus (strain ZK / E33L) protein is Aliphatic sulfonates import ATP-binding protein SsuB.